A 425-amino-acid chain; its full sequence is RNA-binding protein L (425 aa).

Pro residues predominate over residues 1 to 20 (MQQPPSQPQPGMGGPPPPPQ). The interval 1 to 82 (MQQPPSQPQP…AAPPPQAMPA (82 aa)) is disordered. Residues 21-31 (GAAGQPPQWGA) are compositionally biased toward low complexity. The span at 32-80 (IPPPMPPHQYGAPPPQQPPAMWGQPPPQAHYGQVPPPQPYYAAPPPQAM) shows a compositional bias: pro residues. RRM domains lie at 90–170 (KTLW…WASA), 180–259 (YTIF…PAAN), and 284–356 (TTIF…WGRS).

The protein belongs to the polyadenylate-binding RBP45 family. In terms of assembly, interacts with RBP-P. Interacts with RAB5A.

It is found in the nucleus. Its subcellular location is the cytoplasm. Its function is as follows. RNA-binding protein that binds to a cis-localization element or zipcode, within the 5'-CDS of prolamine RNA. Binds strongly to glutelin and prolamin mRNAs, particularly to 3'-UTR and zipcode RNA. Recognizes and binds to glutelin zipcode RNA, which is required for proper mRNA localization to cisternal endoplasmic reticulum. Recognizes and binds to prolamin zipcode RNA, which is required for proper mRNA localization to the protein body endoplasmic reticulum that delimits the prolamine intracisternal inclusion granules. Required for the correct localization of glutelin and prolamine mRNA in endosperm cells during grain development. RBP-L and RBP-P form a quaternary complex with the membrane trafficking factors NSF and RAB5A. This quaternay complex carries glutelin mRNAs for active transport on endosomes to the cortical endoplasmic reticulum membrane, and enables endosome-mediated glutelin mRNA transport in endosperm cells. In Oryza sativa subsp. japonica (Rice), this protein is RNA-binding protein L.